The chain runs to 122 residues: Flagellar hook-basal body complex protein FliE (122 aa).

It belongs to the FliE family.

It localises to the bacterial flagellum basal body. This chain is Flagellar hook-basal body complex protein FliE, found in Marinobacter nauticus (strain ATCC 700491 / DSM 11845 / VT8) (Marinobacter aquaeolei).